The primary structure comprises 609 residues: UvrABC system protein C (609 aa).

The 79-residue stretch at 19–97 (ISPGCYLWKS…IKKHNPRFNV (79 aa)) folds into the GIY-YIG domain. The UVR domain occupies 208–243 (ESLVGDLSIKMSASSNRMDFEKAARYRDMLQRIQNF).

Belongs to the UvrC family. As to quaternary structure, interacts with UvrB in an incision complex.

The protein resides in the cytoplasm. In terms of biological role, the UvrABC repair system catalyzes the recognition and processing of DNA lesions. UvrC both incises the 5' and 3' sides of the lesion. The N-terminal half is responsible for the 3' incision and the C-terminal half is responsible for the 5' incision. The polypeptide is UvrABC system protein C (Leptospira borgpetersenii serovar Hardjo-bovis (strain JB197)).